A 169-amino-acid chain; its full sequence is Ribosome maturation factor RimM (169 aa).

The 76-residue stretch at 92–167 folds into the PRC barrel domain; that stretch reads PKDTYFICDI…YMKIKVVEGL (76 aa).

This sequence belongs to the RimM family. As to quaternary structure, binds ribosomal protein uS19.

Its subcellular location is the cytoplasm. Functionally, an accessory protein needed during the final step in the assembly of 30S ribosomal subunit, possibly for assembly of the head region. Essential for efficient processing of 16S rRNA. May be needed both before and after RbfA during the maturation of 16S rRNA. It has affinity for free ribosomal 30S subunits but not for 70S ribosomes. This chain is Ribosome maturation factor RimM, found in Caldicellulosiruptor bescii (strain ATCC BAA-1888 / DSM 6725 / KCTC 15123 / Z-1320) (Anaerocellum thermophilum).